The primary structure comprises 164 residues: FMN reductase (NADH) RutF (164 aa).

It belongs to the non-flavoprotein flavin reductase family. RutF subfamily.

The enzyme catalyses FMNH2 + NAD(+) = FMN + NADH + 2 H(+). In terms of biological role, catalyzes the reduction of FMN to FMNH2 which is used to reduce pyrimidine by RutA via the Rut pathway. The chain is FMN reductase (NADH) RutF from Shigella flexneri serotype X (strain 2002017).